The chain runs to 99 residues: Large ribosomal subunit protein bL21 (99 aa).

Belongs to the bacterial ribosomal protein bL21 family. In terms of assembly, part of the 50S ribosomal subunit. Contacts protein L20.

Functionally, this protein binds to 23S rRNA in the presence of protein L20. This Neorickettsia sennetsu (strain ATCC VR-367 / Miyayama) (Ehrlichia sennetsu) protein is Large ribosomal subunit protein bL21.